Consider the following 84-residue polypeptide: Perlustrin (84 aa).

The IGFBP N-terminal domain occupies L1–V82. 6 disulfide bridges follow: C3–C28, C6–C30, C11–C31, C18–C34, C42–C55, and C49–C79.

As to expression, shell.

In terms of biological role, binds human IGF1 and IGF2 and bovine insulin. The protein is Perlustrin of Haliotis laevigata (Smooth Australian abalone).